The primary structure comprises 75 residues: MTEKRVEQLESRVNDLECQLAFQEQTIEELNEALSQQQMLITRMQDQMKFVVGKVKNMDGSNLADASEETPPPHY.

The protein belongs to the SlyX family.

In Vibrio atlanticus (strain LGP32) (Vibrio splendidus (strain Mel32)), this protein is Protein SlyX homolog.